A 193-amino-acid chain; its full sequence is Probable nicotinate-nucleotide adenylyltransferase (193 aa).

It belongs to the NadD family.

The enzyme catalyses nicotinate beta-D-ribonucleotide + ATP + H(+) = deamido-NAD(+) + diphosphate. Its pathway is cofactor biosynthesis; NAD(+) biosynthesis; deamido-NAD(+) from nicotinate D-ribonucleotide: step 1/1. Catalyzes the reversible adenylation of nicotinate mononucleotide (NaMN) to nicotinic acid adenine dinucleotide (NaAD). This is Probable nicotinate-nucleotide adenylyltransferase from Chlorobium phaeovibrioides (strain DSM 265 / 1930) (Prosthecochloris vibrioformis (strain DSM 265)).